The primary structure comprises 246 residues: E3 ubiquitin-protein ligase MARCHF2 (246 aa).

Residues aspartate 56–glutamate 116 form an RING-CH-type zinc finger. Zn(2+) is bound by residues cysteine 64, cysteine 67, cysteine 80, cysteine 82, histidine 90, cysteine 93, cysteine 106, and cysteine 109. The interval proline 121–valine 246 is required for interaction with IKBKG. The next 2 membrane-spanning stretches (helical) occupy residues leucine 138 to leucine 158 and alanine 175 to valine 195.

Interacts with STX6; the interaction promotes MARCHF2-mediated ubiquitination and degradation of CFTR. Interacts with MARCHF3. Interacts with GOPC/CAL; the interaction leads to CFTR ubiquitination and degradation. Interacts with CFTR; the interaction leads to CFTR ubiqtuitination and degradation. Interacts (via PDZ domain) with DLG1 (via PDZ domains); the interaction leads to DLG1 ubiqtuitination and degradation. Interacts with ERGIC3. Interacts with ADRB2. Interacts with IKBKG/NEMO; during the late stages of macrophage viral and bacterial infection; the interaction leads to ubiquitination and degradation of IKBKG/NEMO.

It localises to the endoplasmic reticulum membrane. The protein localises to the lysosome membrane. It is found in the endosome membrane. Its subcellular location is the golgi apparatus membrane. The protein resides in the cytoplasm. It localises to the cell membrane. The enzyme catalyses S-ubiquitinyl-[E2 ubiquitin-conjugating enzyme]-L-cysteine + [acceptor protein]-L-lysine = [E2 ubiquitin-conjugating enzyme]-L-cysteine + N(6)-ubiquitinyl-[acceptor protein]-L-lysine.. Its pathway is protein modification; protein ubiquitination. Functionally, E3 ubiquitin-protein ligase that may mediate ubiquitination of TFRC and CD86, and promote their subsequent endocytosis and sorting to lysosomes via multivesicular bodies. E3 ubiquitin ligases accept ubiquitin from an E2 ubiquitin-conjugating enzyme in the form of a thioester and then directly transfer the ubiquitin to targeted substrates. Together with GOPC/CAL mediates the ubiquitination and lysosomal degradation of CFTR. Ubiquitinates and therefore mediates the degradation of DLG1. Regulates the intracellular trafficking and secretion of alpha1-antitrypsin/SERPINA1 and HP/haptoglobin via ubiquitination and degradation of the cargo receptor ERGIC3. Negatively regulates the antiviral and antibacterial immune response by repression of the NF-kB and type 1 IFN signaling pathways, via MARCHF2-mediated K48-linked polyubiquitination of IKBKG/NEMO, resulting in its proteasomal degradation. May be involved in endosomal trafficking through interaction with STX6. This is E3 ubiquitin-protein ligase MARCHF2 (Marchf2) from Mus musculus (Mouse).